Consider the following 129-residue polypeptide: Ribonuclease P protein component (129 aa).

This sequence belongs to the RnpA family. In terms of assembly, consists of a catalytic RNA component (M1 or rnpB) and a protein subunit.

The catalysed reaction is Endonucleolytic cleavage of RNA, removing 5'-extranucleotides from tRNA precursor.. In terms of biological role, RNaseP catalyzes the removal of the 5'-leader sequence from pre-tRNA to produce the mature 5'-terminus. It can also cleave other RNA substrates such as 4.5S RNA. The protein component plays an auxiliary but essential role in vivo by binding to the 5'-leader sequence and broadening the substrate specificity of the ribozyme. The sequence is that of Ribonuclease P protein component from Prochlorococcus marinus (strain MIT 9515).